The chain runs to 382 residues: DnaJ homolog dnj-20 (382 aa).

The first 21 residues, 1-21 (MRILNVSLLVLTAFLVDFVEC), serve as a signal peptide directing secretion. One can recognise a J domain in the interval 24-89 (DFYKILGVSK…EKRAMYDRHG (66 aa)).

The polypeptide is DnaJ homolog dnj-20 (Caenorhabditis briggsae).